A 608-amino-acid chain; its full sequence is Formate hydrogenlyase subunit 3 (608 aa).

12 helical membrane-spanning segments follow: residues 10-26 (GVAW…LFSF), 44-67 (LYTA…LSLV), 76-93 (LNAI…FVSL), 116-140 (AAAV…MALC), 153-173 (LWFA…WLLW), 197-218 (IWLL…HGWV), 229-251 (AAAL…LSLL), 258-280 (WWGI…YALV), 296-312 (IGII…GIAL), 416-440 (LAVG…VTFL), 453-476 (CAPL…GVAA), and 502-521 (MITL…MAIC).

Belongs to the complex I subunit 4 family. As to quaternary structure, FHL comprises of a formate dehydrogenase, unidentified electron carriers and a hydrogenase (isoenzyme 3). In this non-energy conserving pathway molecular hydrogen and carbodioxide from formate are released.

The protein resides in the cell inner membrane. This Escherichia coli (strain K12) protein is Formate hydrogenlyase subunit 3 (hycC).